The sequence spans 337 residues: Cytoskeleton protein RodZ (337 aa).

Topologically, residues 1–111 (MNTEATHDQN…LGKRRKKRDG (111 aa)) are cytoplasmic. In terms of domain architecture, HTH cro/C1-type spans 19–71 (LRNAREQLGLSQQAVAERLCLKVSTVRDIEEDKAPADLASTFLRGYIRSYARL). The segment at residues 30–49 (QQAVAERLCLKVSTVRDIEE) is a DNA-binding region (H-T-H motif). Residues 112–132 (WLMTFTWLVLFVVIGLSGAWW) form a helical; Signal-anchor for type II membrane protein membrane-spanning segment. Over 133 to 337 (WQDHKAQQEE…TLNAEQSPAQ (205 aa)) the chain is Periplasmic. The segment covering 145 to 167 (TMADQSSAELSSNSEQGQSVPLN) has biased composition (polar residues). A disordered region spans residues 145–218 (TMADQSSAEL…AVVSPSQANV (74 aa)). Over residues 168-207 (TSTTTDPATTSTPPASVDTTATNTQTPAVTAPAPAVDPQQ) the composition is skewed to low complexity. A compositionally biased stretch (polar residues) spans 208 to 218 (NAVVSPSQANV).

The protein belongs to the RodZ family.

The protein localises to the cell inner membrane. In terms of biological role, cytoskeletal protein that is involved in cell-shape control through regulation of the length of the long axis. The protein is Cytoskeleton protein RodZ of Shigella dysenteriae serotype 1 (strain Sd197).